A 285-amino-acid polypeptide reads, in one-letter code: Transcription initiation factor IIE subunit beta (285 aa).

Polar residues-rich tracts occupy residues 1–10 and 33–44; these read MSSLSDQLSS and TPTAYLNSNDGH. Residues 1 to 56 form a disordered region; sequence MSSLSDQLSSFKKKVANQPIYAKPQPRQPASPTPTAYLNSNDGHSSAASSPGSYSL. A compositionally biased stretch (low complexity) spans 45 to 55; that stretch reads SSAASSPGSYS. A DNA-binding region (TFIIE beta) is located at residues 67 to 142; it reads YSQPADSGVG…FTFKPLHNIR (76 aa). Positions 240–272 are disordered; the sequence is PTSVDPSTVKRAGHNQTPKQKKPKTRRGKITNT. The segment covering 258 to 268 has biased composition (basic residues); sequence KQKKPKTRRGK.

Belongs to the TFIIE beta subunit family. In terms of assembly, TFIIE is a tetramer of two alpha (tfa1) and two beta (tfa2) subunits. TFIIE associates with RNA polymerase II via the beta subunit.

Its subcellular location is the nucleus. Recruits TFIIH to the initiation complex and stimulates the RNA polymerase II C-terminal domain kinase and DNA-dependent ATPase activities of TFIIH. Both TFIIH and TFIIE are required for promoter clearance by RNA polymerase. This chain is Transcription initiation factor IIE subunit beta (tfa2), found in Schizosaccharomyces pombe (strain 972 / ATCC 24843) (Fission yeast).